The chain runs to 491 residues: UDP-N-acetylmuramate--L-alanine ligase (491 aa).

G126–T132 provides a ligand contact to ATP.

The protein belongs to the MurCDEF family.

The protein resides in the cytoplasm. It carries out the reaction UDP-N-acetyl-alpha-D-muramate + L-alanine + ATP = UDP-N-acetyl-alpha-D-muramoyl-L-alanine + ADP + phosphate + H(+). The protein operates within cell wall biogenesis; peptidoglycan biosynthesis. Cell wall formation. In Photorhabdus laumondii subsp. laumondii (strain DSM 15139 / CIP 105565 / TT01) (Photorhabdus luminescens subsp. laumondii), this protein is UDP-N-acetylmuramate--L-alanine ligase.